Consider the following 509-residue polypeptide: Photosystem II CP47 reaction center protein (509 aa).

6 helical membrane-spanning segments follow: residues 21–36 (SVHL…WAGS), 101–115 (IVLS…VWHW), 140–156 (GIHL…FGAF), 203–218 (IAAG…FHLT), 237–252 (VLSS…AFVV), and 457–472 (VFAL…HGAR).

Belongs to the PsbB/PsbC family. PsbB subfamily. As to quaternary structure, PSII is composed of 1 copy each of membrane proteins PsbA, PsbB, PsbC, PsbD, PsbE, PsbF, PsbH, PsbI, PsbJ, PsbK, PsbL, PsbM, PsbT, PsbX, PsbY, PsbZ, Psb30/Ycf12, peripheral proteins PsbO, CyanoQ (PsbQ), PsbU, PsbV and a large number of cofactors. It forms dimeric complexes. Requires Binds multiple chlorophylls. PSII binds additional chlorophylls, carotenoids and specific lipids. as cofactor.

The protein localises to the cellular thylakoid membrane. One of the components of the core complex of photosystem II (PSII). It binds chlorophyll and helps catalyze the primary light-induced photochemical processes of PSII. PSII is a light-driven water:plastoquinone oxidoreductase, using light energy to abstract electrons from H(2)O, generating O(2) and a proton gradient subsequently used for ATP formation. The chain is Photosystem II CP47 reaction center protein from Nostoc sp. (strain PCC 7120 / SAG 25.82 / UTEX 2576).